The primary structure comprises 953 residues: uncharacterized protein (953 aa).

The next 11 membrane-spanning stretches (helical) occupy residues 23–43, 103–123, 148–168, 392–412, 435–455, 481–501, 540–560, 575–595, 599–619, 642–662, and 666–686; these read VVTSLVSNGTIFGVFVIAFLI, YLFIIAIYCAVSMSYIFPILL, GRYFAHVFCGWIFFWGFLYII, VSAIVALVILWAFPVAFVGMI, LLGLLTSLAPTVALAVLMSFL, AYFAFQVIQVFLVTTLSSAAT, ISSGALLQIVPLILFYVLGAF, LSSMQWGTAFPVYTNLAVITF, IISPLILLFAAVAFFLLYIAY, LFQTIVGIYIGQICLLGLFAV, and WGPIVLQVIGICVTVLIHLHL. The interval 910–953 is disordered; the sequence is VPPPYNDVKDEANGEANGEFDTASKENNPFADPKYKEEESRSAV. A compositionally biased stretch (basic and acidic residues) spans 942–953; that stretch reads PKYKEEESRSAV. At Ser949 the chain carries Phosphoserine.

It belongs to the CSC1 (TC 1.A.17) family.

The protein resides in the membrane. In terms of biological role, acts as an osmosensitive calcium-permeable cation channel. This is an uncharacterized protein from Saccharomyces cerevisiae (strain ATCC 204508 / S288c) (Baker's yeast).